We begin with the raw amino-acid sequence, 100 residues long: Urease subunit gamma (100 aa).

Belongs to the urease gamma subunit family. Heterotrimer of UreA (gamma), UreB (beta) and UreC (alpha) subunits. Three heterotrimers associate to form the active enzyme.

The protein resides in the cytoplasm. It catalyses the reaction urea + 2 H2O + H(+) = hydrogencarbonate + 2 NH4(+). The protein operates within nitrogen metabolism; urea degradation; CO(2) and NH(3) from urea (urease route): step 1/1. The sequence is that of Urease subunit gamma from Synechococcus sp. (strain CC9605).